The primary structure comprises 327 residues: Thiosulfate dehydrogenase (327 aa).

An N-terminal signal peptide occupies residues 1–26 (MKIIPYRKRSVLIATIFAISAVGITG). The span at 66-78 (NDMTATAGGTDTA) shows a compositional bias: low complexity. Residues 66-93 (NDMTATAGGTDTASGKPTIKMPDESTIP) form a disordered region. 2 Cytochrome c domains span residues 99-196 (AAVR…SWLS) and 219-305 (PNTD…THLP). Positions 125, 128, 129, 232, 235, and 236 each coordinate heme c.

As to quaternary structure, monomer. In terms of processing, binds 2 heme c groups covalently per subunit.

It is found in the periplasm. The enzyme catalyses 2 thiosulfate + 2 Fe(III)-[cytochrome c] = tetrathionate + 2 Fe(II)-[cytochrome c] + 2 H(+). Functionally, catalyzes the oxidation of 2 molecules of thiosulfate to tetrathionate. This Psychrobacter arcticus (strain DSM 17307 / VKM B-2377 / 273-4) protein is Thiosulfate dehydrogenase (tsdA).